Here is a 202-residue protein sequence, read N- to C-terminus: Holliday junction branch migration complex subunit RuvA (202 aa).

The segment at M1–S62 is domain I. Residues D63–T141 form a domain II region. The flexible linker stretch occupies residues L142–T151. The interval T152–K202 is domain III.

It belongs to the RuvA family. Homotetramer. Forms an RuvA(8)-RuvB(12)-Holliday junction (HJ) complex. HJ DNA is sandwiched between 2 RuvA tetramers; dsDNA enters through RuvA and exits via RuvB. An RuvB hexamer assembles on each DNA strand where it exits the tetramer. Each RuvB hexamer is contacted by two RuvA subunits (via domain III) on 2 adjacent RuvB subunits; this complex drives branch migration. In the full resolvosome a probable DNA-RuvA(4)-RuvB(12)-RuvC(2) complex forms which resolves the HJ.

It localises to the cytoplasm. The RuvA-RuvB-RuvC complex processes Holliday junction (HJ) DNA during genetic recombination and DNA repair, while the RuvA-RuvB complex plays an important role in the rescue of blocked DNA replication forks via replication fork reversal (RFR). RuvA specifically binds to HJ cruciform DNA, conferring on it an open structure. The RuvB hexamer acts as an ATP-dependent pump, pulling dsDNA into and through the RuvAB complex. HJ branch migration allows RuvC to scan DNA until it finds its consensus sequence, where it cleaves and resolves the cruciform DNA. This chain is Holliday junction branch migration complex subunit RuvA, found in Levilactobacillus brevis (strain ATCC 367 / BCRC 12310 / CIP 105137 / JCM 1170 / LMG 11437 / NCIMB 947 / NCTC 947) (Lactobacillus brevis).